A 523-amino-acid polypeptide reads, in one-letter code: Histidine ammonia-lyase (523 aa).

Residues 148–150 (ASG) constitute a cross-link (5-imidazolinone (Ala-Gly)). The residue at position 149 (S149) is a 2,3-didehydroalanine (Ser).

This sequence belongs to the PAL/histidase family. In terms of processing, contains an active site 4-methylidene-imidazol-5-one (MIO), which is formed autocatalytically by cyclization and dehydration of residues Ala-Ser-Gly.

The protein localises to the cytoplasm. The catalysed reaction is L-histidine = trans-urocanate + NH4(+). It participates in amino-acid degradation; L-histidine degradation into L-glutamate; N-formimidoyl-L-glutamate from L-histidine: step 1/3. This is Histidine ammonia-lyase from Chloroflexus aurantiacus (strain ATCC 29366 / DSM 635 / J-10-fl).